Reading from the N-terminus, the 485-residue chain is Homospermidine synthase (485 aa).

This sequence belongs to the saccharopine dehydrogenase family. The cofactor is NAD(+).

It carries out the reaction 2 putrescine = sym-homospermidine + NH4(+). The catalysed reaction is putrescine + spermidine = sym-homospermidine + propane-1,3-diamine. Its function is as follows. Involved in the NAD(+)-dependent synthesis of the polyamine homospermidine from putrescine. The protein is Homospermidine synthase (hss) of Mesorhizobium japonicum (strain LMG 29417 / CECT 9101 / MAFF 303099) (Mesorhizobium loti (strain MAFF 303099)).